A 173-amino-acid polypeptide reads, in one-letter code: Protein TraS (173 aa).

It localises to the cell inner membrane. Functionally, involved in surface exclusion. This Escherichia coli (strain K12) protein is Protein TraS (traS).